The sequence spans 209 residues: N-acetyltransferase aca1 (209 aa).

The region spanning 26-202 (TNVKNKEELL…DAYIYQYHFP (177 aa)) is the N-acetyltransferase domain. Asn-118 contacts substrate. 128–133 (RSKGIG) is a binding site for CoA. 155 to 156 (NL) contributes to the substrate binding site.

It belongs to the acetyltransferase family. Homodimer.

Its subcellular location is the cytoplasm. The protein resides in the mitochondrion. The catalysed reaction is L-glutamate 5-semialdehyde + acetyl-CoA = N-acetyl-L-glutamate 5-semialdehyde + CoA + H(+). Functionally, N-acetyltransferase involved in oxidative stress resistance. Acetylates the toxic proline metabolism intermediate (S)-1-pyrroline-5-carboxylate (P5C), or more likely its spontaneously forming tautomer glutamate-5-semialdehyde (GSA) into N-acetyl-GSA for arginine synthesis in the mitochondria. P5C has been shown to increase the levels of reactive oxygen species (ROS) in the cell by inhibiting the function of the respiratory chain in the mitochondria. The enzyme is able to reduce intracellular ROS levels under P5C-induced oxidative stress and protects cells from damage by oxidative stress. Also acetylates and thereby detoxifies the proline analog azetidine-2-carboxylate (AZC), however it is unlikely that AZC is a natural substrate as it occurs only in plants belonging to the Lilaceae family. This chain is N-acetyltransferase aca1, found in Schizosaccharomyces pombe (strain 972 / ATCC 24843) (Fission yeast).